The primary structure comprises 360 residues: DNA replication and repair protein RecF (360 aa).

30-37 lines the ATP pocket; that stretch reads GANGSGKT.

It belongs to the RecF family.

The protein localises to the cytoplasm. Its function is as follows. The RecF protein is involved in DNA metabolism; it is required for DNA replication and normal SOS inducibility. RecF binds preferentially to single-stranded, linear DNA. It also seems to bind ATP. This Acinetobacter baumannii (strain SDF) protein is DNA replication and repair protein RecF.